The following is a 111-amino-acid chain: Ferredoxin-thioredoxin reductase, catalytic chain (111 aa).

Cysteine 52 provides a ligand contact to [4Fe-4S] cluster. Residue cysteine 54 is the Nucleophile of the active site. Cysteine 54 and cysteine 84 are joined by a disulfide. 3 residues coordinate [4Fe-4S] cluster: cysteine 71, cysteine 73, and cysteine 82.

Belongs to the ferredoxin thioredoxin reductase beta subunit family. In terms of assembly, heterodimer of subunit A (variable subunit) and subunit B (catalytic subunit). Heterodimeric FTR forms a complex with ferredoxin and thioredoxin. Requires [4Fe-4S] cluster as cofactor.

It is found in the plastid. The protein localises to the chloroplast. It carries out the reaction [thioredoxin]-disulfide + 2 reduced [2Fe-2S]-[ferredoxin] + 2 H(+) = [thioredoxin]-dithiol + 2 oxidized [2Fe-2S]-[ferredoxin]. Functionally, catalytic subunit of the ferredoxin-thioredoxin reductase (FTR), which catalyzes the two-electron reduction of thioredoxins by the electrons provided by reduced ferredoxin. This Cyanidium caldarium (Red alga) protein is Ferredoxin-thioredoxin reductase, catalytic chain (ftrB).